The sequence spans 521 residues: Bifunctional purine biosynthesis protein PurH (521 aa).

The MGS-like domain maps to 1–145; sequence MIKQALISVS…KNHRDVTVVV (145 aa).

Belongs to the PurH family.

The catalysed reaction is (6R)-10-formyltetrahydrofolate + 5-amino-1-(5-phospho-beta-D-ribosyl)imidazole-4-carboxamide = 5-formamido-1-(5-phospho-D-ribosyl)imidazole-4-carboxamide + (6S)-5,6,7,8-tetrahydrofolate. The enzyme catalyses IMP + H2O = 5-formamido-1-(5-phospho-D-ribosyl)imidazole-4-carboxamide. It participates in purine metabolism; IMP biosynthesis via de novo pathway; 5-formamido-1-(5-phospho-D-ribosyl)imidazole-4-carboxamide from 5-amino-1-(5-phospho-D-ribosyl)imidazole-4-carboxamide (10-formyl THF route): step 1/1. It functions in the pathway purine metabolism; IMP biosynthesis via de novo pathway; IMP from 5-formamido-1-(5-phospho-D-ribosyl)imidazole-4-carboxamide: step 1/1. This chain is Bifunctional purine biosynthesis protein PurH, found in Burkholderia vietnamiensis (strain G4 / LMG 22486) (Burkholderia cepacia (strain R1808)).